We begin with the raw amino-acid sequence, 2282 residues long: Protein Ycf2 (2282 aa).

1635–1642 (GSIGTGRS) contacts ATP.

Belongs to the Ycf2 family.

It localises to the plastid. The protein localises to the chloroplast stroma. Its function is as follows. Probable ATPase of unknown function. Its presence in a non-photosynthetic plant (Epifagus virginiana) and experiments in tobacco indicate that it has an essential function which is probably not related to photosynthesis. The polypeptide is Protein Ycf2 (Populus alba (White poplar)).